Reading from the N-terminus, the 237-residue chain is Ribonuclease PH (237 aa).

Phosphate-binding positions include Arg-86 and 124–126 (GTR).

Belongs to the RNase PH family. In terms of assembly, homohexameric ring arranged as a trimer of dimers.

It catalyses the reaction tRNA(n+1) + phosphate = tRNA(n) + a ribonucleoside 5'-diphosphate. In terms of biological role, phosphorolytic 3'-5' exoribonuclease that plays an important role in tRNA 3'-end maturation. Removes nucleotide residues following the 3'-CCA terminus of tRNAs; can also add nucleotides to the ends of RNA molecules by using nucleoside diphosphates as substrates, but this may not be physiologically important. Probably plays a role in initiation of 16S rRNA degradation (leading to ribosome degradation) during starvation. The sequence is that of Ribonuclease PH from Cereibacter sphaeroides (strain ATCC 17029 / ATH 2.4.9) (Rhodobacter sphaeroides).